A 417-amino-acid chain; its full sequence is RH-like protein IC (417 aa).

A run of 11 helical transmembrane segments spans residues 12-32, 44-64, 77-97, 125-145, 172-192, 203-223, 238-258, 265-285, 287-307, 331-351, and 358-378; these read CLPL…YFFT, LVAS…GFGF, VAFN…LDGF, ISAG…MVLV, FYVF…KPLP, TIPS…WPSF, VFNT…VSSL, INMT…GTSC, LITS…ISIG, NFSL…VLHT, and MVGF…AIAV.

This sequence belongs to the ammonium transporter (TC 2.A.49) family. Rh subfamily.

It is found in the membrane. Functionally, may be part of an oligomeric complex which is likely to have a transport or channel function in the erythrocyte membrane. The chain is RH-like protein IC from Gorilla gorilla gorilla (Western lowland gorilla).